A 174-amino-acid polypeptide reads, in one-letter code: RNA pyrophosphohydrolase (174 aa).

A Nudix hydrolase domain is found at 6–149; sequence GYRPNVGIIL…KRDVYERALS (144 aa). A Nudix box motif is present at residues 38-59; that stretch reads GGIKPGESPEAAMYRELLEEVG.

The protein belongs to the Nudix hydrolase family. RppH subfamily. A divalent metal cation serves as cofactor.

In terms of biological role, accelerates the degradation of transcripts by removing pyrophosphate from the 5'-end of triphosphorylated RNA, leading to a more labile monophosphorylated state that can stimulate subsequent ribonuclease cleavage. The polypeptide is RNA pyrophosphohydrolase (Chromobacterium violaceum (strain ATCC 12472 / DSM 30191 / JCM 1249 / CCUG 213 / NBRC 12614 / NCIMB 9131 / NCTC 9757 / MK)).